The sequence spans 346 residues: Holliday junction branch migration complex subunit RuvB (346 aa).

Residues 1–182 form a large ATPase domain (RuvB-L) region; that stretch reads MTRVISGEPQ…FGIPIRLEFY (182 aa). The ATP site is built by Leu-21, Arg-22, Gly-63, Lys-66, Thr-67, Thr-68, Arg-172, Tyr-182, and Arg-219. Thr-67 contacts Mg(2+). The tract at residues 183-253 is small ATPAse domain (RuvB-S); the sequence is TPAELRHVLQ…AAAMALARLE (71 aa). The interval 256–346 is head domain (RuvB-H); it reads ESGLDSLDRR…QAQGALFDEG (91 aa). Positions 292, 311, and 316 each coordinate DNA.

This sequence belongs to the RuvB family. In terms of assembly, homohexamer. Forms an RuvA(8)-RuvB(12)-Holliday junction (HJ) complex. HJ DNA is sandwiched between 2 RuvA tetramers; dsDNA enters through RuvA and exits via RuvB. An RuvB hexamer assembles on each DNA strand where it exits the tetramer. Each RuvB hexamer is contacted by two RuvA subunits (via domain III) on 2 adjacent RuvB subunits; this complex drives branch migration. In the full resolvosome a probable DNA-RuvA(4)-RuvB(12)-RuvC(2) complex forms which resolves the HJ.

It localises to the cytoplasm. The catalysed reaction is ATP + H2O = ADP + phosphate + H(+). Functionally, the RuvA-RuvB-RuvC complex processes Holliday junction (HJ) DNA during genetic recombination and DNA repair, while the RuvA-RuvB complex plays an important role in the rescue of blocked DNA replication forks via replication fork reversal (RFR). RuvA specifically binds to HJ cruciform DNA, conferring on it an open structure. The RuvB hexamer acts as an ATP-dependent pump, pulling dsDNA into and through the RuvAB complex. RuvB forms 2 homohexamers on either side of HJ DNA bound by 1 or 2 RuvA tetramers; 4 subunits per hexamer contact DNA at a time. Coordinated motions by a converter formed by DNA-disengaged RuvB subunits stimulates ATP hydrolysis and nucleotide exchange. Immobilization of the converter enables RuvB to convert the ATP-contained energy into a lever motion, pulling 2 nucleotides of DNA out of the RuvA tetramer per ATP hydrolyzed, thus driving DNA branch migration. The RuvB motors rotate together with the DNA substrate, which together with the progressing nucleotide cycle form the mechanistic basis for DNA recombination by continuous HJ branch migration. Branch migration allows RuvC to scan DNA until it finds its consensus sequence, where it cleaves and resolves cruciform DNA. The polypeptide is Holliday junction branch migration complex subunit RuvB (Caulobacter vibrioides (strain ATCC 19089 / CIP 103742 / CB 15) (Caulobacter crescentus)).